The following is a 269-amino-acid chain: GTP cyclohydrolase FolE2 (269 aa).

Belongs to the GTP cyclohydrolase IV family.

The enzyme catalyses GTP + H2O = 7,8-dihydroneopterin 3'-triphosphate + formate + H(+). It functions in the pathway cofactor biosynthesis; 7,8-dihydroneopterin triphosphate biosynthesis; 7,8-dihydroneopterin triphosphate from GTP: step 1/1. In terms of biological role, converts GTP to 7,8-dihydroneopterin triphosphate. The protein is GTP cyclohydrolase FolE2 of Burkholderia mallei (strain NCTC 10229).